Reading from the N-terminus, the 266-residue chain is Cyclin-C (266 aa).

One can recognise a Cyclin N-terminal domain in the interval 47-151 (IIQVLGEQLK…LLENLDCCLI (105 aa)).

This sequence belongs to the cyclin family. Cyclin C subfamily. As to quaternary structure, component of the Cdk8 module of the Mediator complex.

Its subcellular location is the nucleus. Functionally, component of the Mediator complex, a coactivator involved in regulated gene transcription of nearly all RNA polymerase II-dependent genes. Mediator functions as a bridge to convey information from gene-specific regulatory proteins to the basal RNA polymerase II transcription machinery. Mediator is recruited to promoters by direct interactions with regulatory proteins and serves as a scaffold for the assembly of a functional preinitiation complex with RNA polymerase II and the general transcription factors. Binds to and activates cyclin-dependent kinase Cdk8 that phosphorylates the CTD (C-terminal domain) of the large subunit of RNA polymerase II (RNAp II), which may inhibit the formation of a transcription initiation complex. In Anopheles gambiae (African malaria mosquito), this protein is Cyclin-C (CycC).